The primary structure comprises 81 residues: uncharacterized protein (81 aa).

This is an uncharacterized protein from Dictyostelium discoideum (Social amoeba).